A 341-amino-acid chain; its full sequence is KH domain-containing RNA-binding protein qki.S (341 aa).

In terms of domain architecture, KH spans 88-154 (YVPVKEYPDF…WEHLNEDLHV (67 aa)). Positions 324–330 (RVHPYQR) match the Nuclear localization signal motif.

The protein belongs to the quaking family. As to quaternary structure, homodimer; does not require RNA to homodimerize.

Its subcellular location is the nucleus. The protein resides in the cytoplasm. RNA reader protein, which recognizes and binds specific RNAs, thereby regulating RNA metabolic processes, such as pre-mRNA splicing, circular RNA (circRNA) formation, mRNA export, mRNA stability and/or translation. Involved in various cellular processes, such as mRNA storage into stress granules, apoptosis, interferon response, glial cell fate and development. Binds to the 5'-NACUAAY-N(1,20)-UAAY-3' RNA core sequence. Acts as a mRNA modification reader that specifically recognizes and binds mRNA transcripts modified by internal N(7)-methylguanine (m7G). Promotes the formation of circular RNAs (circRNAs): acts by binding to sites flanking circRNA-forming exons. CircRNAs are produced by back-splicing circularization of pre-mRNAs. Required to protect and promote stability of mRNAs which promotes oligodendrocyte differentiation. Acts as an important regulator of muscle development. Essential for notochord development. This Xenopus laevis (African clawed frog) protein is KH domain-containing RNA-binding protein qki.S.